Reading from the N-terminus, the 318-residue chain is sn-1 stearoyl-lipid 9-desaturase (318 aa).

The next 2 helical transmembrane spans lie at 56–76 (VIFF…PQFF) and 80–100 (AVGM…TLGF). The Histidine box-1 motif lies at 101–106 (HRCISH). Residues 117–137 (YIFVICGTLACQGGVFEWVGL) traverse the membrane as a helical segment. Positions 138–142 (HRMHH) match the Histidine box-2 motif. The helical transmembrane segment at 201 to 221 (VALGLILFALGGWPFVIWGIF) threads the bilayer. The Histidine box-3 motif lies at 271-275 (HHAYQ).

This sequence belongs to the fatty acid desaturase type 2 family. Requires Fe(2+) as cofactor.

It localises to the cellular thylakoid membrane. The catalysed reaction is a 1-octadecanoyl 2-acyl-glycerolipid + 2 reduced [2Fe-2S]-[ferredoxin] + O2 + 2 H(+) = a 1-[(9Z)-octadecenoyl]-2-acyl-glycerolipid + 2 oxidized [2Fe-2S]-[ferredoxin] + 2 H2O. Its pathway is lipid metabolism; polyunsaturated fatty acid biosynthesis. Its function is as follows. Desaturase involved in fatty acid biosynthesis. Introduces a double bond at carbon 9 of stearoyl groups (18:0) attached to the sn-1 position of the glycerol moiety of membrane glycerolipids. Does not desaturate palmitic acid (16:0), palmitoleic acid (16:1) and cis-vaccenic acid (18:1). This is sn-1 stearoyl-lipid 9-desaturase from Synechocystis sp. (strain ATCC 27184 / PCC 6803 / Kazusa).